The primary structure comprises 327 residues: Immunodominant envelope protein p35 (327 aa).

The interval 41–69 is disordered; the sequence is KNGYDDYRDPPSPKPLPKSKQEPNADDKV. Over residues 59–69 the composition is skewed to basic and acidic residues; the sequence is SKQEPNADDKV. A helical transmembrane segment spans residues 291–311; the sequence is ITMMFLIAIVIIIGLAIFDIN.

This sequence belongs to the poxviruses protein p35 family.

The protein resides in the virion membrane. Its function is as follows. Envelope protein that binds to the cell surface to provide virion attachment to target cell. The sequence is that of Immunodominant envelope protein p35 from Fowlpox virus (strain NVSL) (FPV).